Consider the following 662-residue polypeptide: Acetyl-coenzyme A synthetase (662 aa).

Residues 197–200 (RKGK) and threonine 317 each bind CoA. Residues 393–395 (GEP), 417–422 (DTWWQT), aspartate 510, and arginine 525 contribute to the ATP site. Serine 533 is a CoA binding site. ATP is bound at residue arginine 536. Histidine 549 and valine 552 together coordinate Mg(2+). Lysine 623 carries the N6-acetyllysine modification.

Belongs to the ATP-dependent AMP-binding enzyme family. The cofactor is Mg(2+). In terms of processing, acetylated. Deacetylation by the SIR2-homolog deacetylase activates the enzyme.

It carries out the reaction acetate + ATP + CoA = acetyl-CoA + AMP + diphosphate. In terms of biological role, catalyzes the conversion of acetate into acetyl-CoA (AcCoA), an essential intermediate at the junction of anabolic and catabolic pathways. AcsA undergoes a two-step reaction. In the first half reaction, AcsA combines acetate with ATP to form acetyl-adenylate (AcAMP) intermediate. In the second half reaction, it can then transfer the acetyl group from AcAMP to the sulfhydryl group of CoA, forming the product AcCoA. The chain is Acetyl-coenzyme A synthetase from Helicobacter pylori (strain HPAG1).